A 307-amino-acid polypeptide reads, in one-letter code: Recombination-associated protein RdgC (307 aa).

This sequence belongs to the RdgC family.

Its subcellular location is the cytoplasm. It localises to the nucleoid. Functionally, may be involved in recombination. This is Recombination-associated protein RdgC from Colwellia psychrerythraea (strain 34H / ATCC BAA-681) (Vibrio psychroerythus).